A 500-amino-acid chain; its full sequence is MLNINFVNEESSTNQGLVVFIDEQLKLDSNLIGLDQQHHGLISKTIQNKLQFTGKYGQIKVIPSVIKSGEVRYLIIAGLGNEEKLTEAKIEELGGKILQHAICAKISTICLKLTNRISRFTSQTFASLVASGAFLASYRFNKYRTTLKEAEKFAVESIEIFTDNSTEAAKLFEVKKLIAEAVFFTRDICNEPSNIKTPQVYAERIVDILEPFGVDVDVIGEREMKNLGMGALLGVGQGSQNESKLVVMEYKGGNKDVPTIALVGKGVIFDTGGISLKPSSNMHLMRYDMGGSAAVVGAMIAVAGQKLPVNIVGVVGLVENMPSGNAQRPGDVVTTMSGQTAEVLNTDAEGRLVLADAVWYAQEKFKPKCVIDVATLTGAITVALGSTYAGCFSNNDELADKLIKVGEEVNEKLWRMPLHDEYDAMINSDIADMANIGNVPGAAGSCTAAHFIKRFIKDGVDWAHLDIAGVANSNKASALGPKGAVGYGVRLLEKFIKEYI.

Residues Lys265 and Asp270 each coordinate Mn(2+). The active site involves Lys277. Asp288, Asp347, and Glu349 together coordinate Mn(2+). The active site involves Arg351.

It belongs to the peptidase M17 family. It depends on Mn(2+) as a cofactor.

Its subcellular location is the cytoplasm. The enzyme catalyses Release of an N-terminal amino acid, Xaa-|-Yaa-, in which Xaa is preferably Leu, but may be other amino acids including Pro although not Arg or Lys, and Yaa may be Pro. Amino acid amides and methyl esters are also readily hydrolyzed, but rates on arylamides are exceedingly low.. It catalyses the reaction Release of an N-terminal amino acid, preferentially leucine, but not glutamic or aspartic acids.. Presumably involved in the processing and regular turnover of intracellular proteins. Catalyzes the removal of unsubstituted N-terminal amino acids from various peptides. This chain is Probable cytosol aminopeptidase, found in Rickettsia felis (strain ATCC VR-1525 / URRWXCal2) (Rickettsia azadi).